The following is a 354-amino-acid chain: Nicotinate-nucleotide--dimethylbenzimidazole phosphoribosyltransferase (354 aa).

Glutamate 313 functions as the Proton acceptor in the catalytic mechanism.

Belongs to the CobT family.

The catalysed reaction is 5,6-dimethylbenzimidazole + nicotinate beta-D-ribonucleotide = alpha-ribazole 5'-phosphate + nicotinate + H(+). Its pathway is nucleoside biosynthesis; alpha-ribazole biosynthesis; alpha-ribazole from 5,6-dimethylbenzimidazole: step 1/2. In terms of biological role, catalyzes the synthesis of alpha-ribazole-5'-phosphate from nicotinate mononucleotide (NAMN) and 5,6-dimethylbenzimidazole (DMB). This chain is Nicotinate-nucleotide--dimethylbenzimidazole phosphoribosyltransferase, found in Ralstonia nicotianae (strain ATCC BAA-1114 / GMI1000) (Ralstonia solanacearum).